Reading from the N-terminus, the 116-residue chain is U16-barytoxin-Tl1a (116 aa).

The signal sequence occupies residues M1–A20. The propeptide occupies K21–R74. 3 disulfide bridges follow: C75–C90, C82–C95, and C89–C110.

This sequence belongs to the neurotoxin 14 (magi-1) family. 06 (ICK-Trit) subfamily. In terms of tissue distribution, expressed by the venom gland.

It is found in the secreted. Its function is as follows. Ion channel inhibitor. The chain is U16-barytoxin-Tl1a from Trittame loki (Brush-footed trapdoor spider).